A 619-amino-acid chain; its full sequence is Elongation factor 4 (619 aa).

The tr-type G domain occupies 17–198 (SVIRNFCIIA…RVVRAIPGPE (182 aa)). Residues 29–34 (DHGKST) and 145–148 (NKID) contribute to the GTP site.

It belongs to the TRAFAC class translation factor GTPase superfamily. Classic translation factor GTPase family. LepA subfamily.

The protein localises to the cell membrane. The catalysed reaction is GTP + H2O = GDP + phosphate + H(+). Its function is as follows. Required for accurate and efficient protein synthesis under certain stress conditions. May act as a fidelity factor of the translation reaction, by catalyzing a one-codon backward translocation of tRNAs on improperly translocated ribosomes. Back-translocation proceeds from a post-translocation (POST) complex to a pre-translocation (PRE) complex, thus giving elongation factor G a second chance to translocate the tRNAs correctly. Binds to ribosomes in a GTP-dependent manner. In Micrococcus luteus (strain ATCC 4698 / DSM 20030 / JCM 1464 / CCM 169 / CCUG 5858 / IAM 1056 / NBRC 3333 / NCIMB 9278 / NCTC 2665 / VKM Ac-2230) (Micrococcus lysodeikticus), this protein is Elongation factor 4.